The primary structure comprises 138 residues: Cysteine desulfuration protein SufE (138 aa).

Cys51 serves as the catalytic Cysteine persulfide intermediate.

This sequence belongs to the SufE family. In terms of assembly, homodimer. Interacts with SufS.

The protein resides in the cytoplasm. It participates in cofactor biosynthesis; iron-sulfur cluster biosynthesis. Participates in cysteine desulfuration mediated by SufS. Cysteine desulfuration mobilizes sulfur from L-cysteine to yield L-alanine and constitutes an essential step in sulfur metabolism for biosynthesis of a variety of sulfur-containing biomolecules. Functions as a sulfur acceptor for SufS, by mediating the direct transfer of the sulfur atom from the S-sulfanylcysteine of SufS, an intermediate product of cysteine desulfuration process. The protein is Cysteine desulfuration protein SufE of Escherichia coli O8 (strain IAI1).